The sequence spans 56 residues: Large ribosomal subunit protein bL33 (56 aa).

The span at 1–12 shows a compositional bias: basic and acidic residues; that stretch reads MATKGGRDKIKL. The disordered stretch occupies residues 1 to 24; sequence MATKGGRDKIKLESTAGTGHFYTT. Positions 15 to 24 are enriched in polar residues; it reads TAGTGHFYTT.

It belongs to the bacterial ribosomal protein bL33 family.

The sequence is that of Large ribosomal subunit protein bL33 from Paracidovorax citrulli (strain AAC00-1) (Acidovorax citrulli).